The primary structure comprises 60 residues: Large ribosomal subunit protein bL32 (60 aa).

The disordered stretch occupies residues 1–23 (MAVPARHTSKAKKNKRRTHYKLT). Basic residues predominate over residues 7 to 20 (HTSKAKKNKRRTHY).

This sequence belongs to the bacterial ribosomal protein bL32 family.

The chain is Large ribosomal subunit protein bL32 from Streptococcus equi subsp. equi (strain 4047).